The chain runs to 71 residues: Protein CYSTEINE-RICH TRANSMEMBRANE MODULE 6 (71 aa).

Positions methionine 1 to alanine 12 are enriched in polar residues. Residues methionine 1–threonine 36 form a disordered region. The span at proline 14–glycine 30 shows a compositional bias: pro residues. Residues serine 48–cysteine 64 traverse the membrane as a helical segment.

Belongs to the CYSTM1 family. Homodimer and heterodimers. Interacts with CYSTM7 and WIH1/CYSTM13. As to expression, mostly expressed in roots, stems, rosette leaves and siliques and, to a lower extent, in flowers and cauline leaves.

It localises to the cell membrane. The protein localises to the cytoplasm. In terms of biological role, involved in resistance to abiotic stress. In Arabidopsis thaliana (Mouse-ear cress), this protein is Protein CYSTEINE-RICH TRANSMEMBRANE MODULE 6.